The chain runs to 240 residues: Adiponectin (240 aa).

The first 17 residues, 1 to 17 (MLLQGALLLLLALPSHG), serve as a signal peptide directing secretion. A 5-hydroxylysine modification is found at Lys-28. O-linked (Gal...) hydroxylysine glycosylation occurs at Lys-28. The interval 29 to 100 (GACAGWMAGI…GTPGRKGEPG (72 aa)) is disordered. Cys-31 bears the S-(2-succinyl)cysteine mark. A 4-hydroxyproline mark is found at Pro-39, Pro-42, and Pro-48. The region spanning 43 to 102 (GHNGTPGRDGRDGTPGEKGEKGDPGLVGPKGDTGETGITGIEGPRGFPGTPGRKGEPGES) is the Collagen-like domain. Residues 50–65 (RDGRDGTPGEKGEKGD) show a composition bias toward basic and acidic residues. 5-hydroxylysine is present on residues Lys-60, Lys-63, and Lys-72. O-linked (Gal...) hydroxylysine glycans are attached at residues Lys-60, Lys-63, and Lys-72. Pro-86 bears the 4-hydroxyproline mark. Residue Lys-96 is modified to 5-hydroxylysine. The O-linked (Gal...) hydroxylysine glycan is linked to Lys-96. Positions 103–240 (AYVYRSAFSV…GFLLYHNIVE (138 aa)) constitute a C1q domain.

Homomultimer. Forms trimers, hexamers and 12- to 18-mers. The trimers (low molecular weight complexes / LMW) are assembled via non-covalent interactions of the collagen-like domains in a triple helix and hydrophobic interactions within the globular C1q domain. Several trimers can associate to form disulfide-linked hexamers (middle molecular weight complexes / MMW) and larger complexes (higher molecular weight / HMW). The HMW-complex assembly is also modulated by the degree of lysine hydroxylation and glycosylation. LMW, MMW and HMW complexes bind to HBEGF, MMW and HMW complexes bind to PDGFB, and HMW complex binds to FGF2. Interacts with CTRP9 via the C1q domain (heterotrimeric complex). Post-translationally, HMW complexes are more extensively glycosylated than smaller oligomers. Hydroxylation and glycosylation of the lysine residues within the collagen-like domain of adiponectin seem to be critically involved in regulating the formation and/or secretion of HMW complexes and consequently contribute to the insulin-sensitizing activity of adiponectin in hepatocytes. In terms of processing, O-glycosylated. O-linked glycans on hydroxylysine residues consist of Glc-Gal disaccharides bound to the oxygen atom of post-translationally added hydroxyl groups. O-linked glycosylations elsewhere disialylated with the structure Neu5Acalpha2-&gt;8Neu5Acalpha2-&gt;3Gal. Sialylated by alpha 2,8-sialyltransferase III. Desialylated forms are rapidly cleared from the circulation. Not N-glycosylated. Succination of Cys-31 by the Krebs cycle intermediate fumarate, which leads to S-(2-succinyl)cysteine residues, inhibits polymerization and secretion of adiponectin. Adiponectin is a major target for succination in both adipocytes and adipose tissue of diabetic mammals. It was proposed that succination of proteins is a biomarker of mitochondrial stress and accumulation of Krebs cycle intermediates in adipose tissue in diabetes and that succination of adiponectin may contribute to the decrease in plasma adiponectin in diabetes.

Its subcellular location is the secreted. With respect to regulation, polymerization and secretion of adiponectin is inhibited by succination of cysteine residues by the Krebs cycle intermediate fumarate, which leads to S-(2-succinyl)cysteine residues. Functionally, important adipokine involved in the control of fat metabolism and insulin sensitivity, with direct anti-diabetic, anti-atherogenic and anti-inflammatory activities. Stimulates AMPK phosphorylation and activation in the liver and the skeletal muscle, enhancing glucose utilization and fatty-acid combustion. Antagonizes TNF-alpha by negatively regulating its expression in various tissues such as liver and macrophages, and also by counteracting its effects. Inhibits endothelial NF-kappa-B signaling through a cAMP-dependent pathway. May play a role in cell growth, angiogenesis and tissue remodeling by binding and sequestering various growth factors with distinct binding affinities, depending on the type of complex, LMW, MMW or HMW. This is Adiponectin (ADIPOQ) from Bos taurus (Bovine).